We begin with the raw amino-acid sequence, 130 residues long: Small ribosomal subunit protein uS9 (130 aa).

It belongs to the universal ribosomal protein uS9 family.

The protein is Small ribosomal subunit protein uS9 of Pectobacterium carotovorum subsp. carotovorum (strain PC1).